A 136-amino-acid chain; its full sequence is Small ribosomal subunit protein eS6 (136 aa).

The protein belongs to the eukaryotic ribosomal protein eS6 family.

This is Small ribosomal subunit protein eS6 from Methanosarcina acetivorans (strain ATCC 35395 / DSM 2834 / JCM 12185 / C2A).